A 655-amino-acid chain; its full sequence is p-hydroxybenzoic acid efflux pump subunit AaeB (655 aa).

11 consecutive transmembrane segments (helical) span residues 13–33 (FAVK…HFQL), 38–58 (WAVL…GGEP), 69–89 (LRII…IAMI), 93–113 (LLMI…SSLV), 121–141 (WGLA…EPLL), 152–172 (EIVI…PRSI), 370–390 (LFWL…IAVV), 407–427 (FIYG…VIIP), 431–451 (QSML…GIEV), 459–479 (MGAL…TFHF), and 482–502 (FLDS…VILL).

The protein belongs to the aromatic acid exporter ArAE (TC 2.A.85) family.

The protein localises to the cell inner membrane. Its function is as follows. Forms an efflux pump with AaeA. Could function as a metabolic relief valve, allowing to eliminate certain compounds when they accumulate to high levels in the cell. In Shigella boydii serotype 18 (strain CDC 3083-94 / BS512), this protein is p-hydroxybenzoic acid efflux pump subunit AaeB.